The following is a 291-amino-acid chain: Shikimate dehydrogenase (NADP(+)) (291 aa).

Residues 26–28 (SLS) and Ser-73 contribute to the shikimate site. Residue Lys-77 is the Proton acceptor of the active site. Residues Asn-98 and Asp-113 each coordinate shikimate. Residues 137–141 (GAGGA) and Val-238 each bind NADP(+). Shikimate is bound at residue Tyr-240. Residue Gly-261 coordinates NADP(+).

The protein belongs to the shikimate dehydrogenase family. In terms of assembly, homodimer.

The enzyme catalyses shikimate + NADP(+) = 3-dehydroshikimate + NADPH + H(+). It participates in metabolic intermediate biosynthesis; chorismate biosynthesis; chorismate from D-erythrose 4-phosphate and phosphoenolpyruvate: step 4/7. Its function is as follows. Involved in the biosynthesis of the chorismate, which leads to the biosynthesis of aromatic amino acids. Catalyzes the reversible NADPH linked reduction of 3-dehydroshikimate (DHSA) to yield shikimate (SA). This Listeria innocua serovar 6a (strain ATCC BAA-680 / CLIP 11262) protein is Shikimate dehydrogenase (NADP(+)).